The primary structure comprises 591 residues: L-fucose isomerase (591 aa).

Catalysis depends on proton acceptor residues Glu337 and Asp361. Residues Glu337, Asp361, and His528 each coordinate Mn(2+).

The protein belongs to the L-fucose isomerase family. Homohexamer. It depends on Mn(2+) as a cofactor.

Its subcellular location is the cytoplasm. The enzyme catalyses L-fucose = L-fuculose. It functions in the pathway carbohydrate degradation; L-fucose degradation; L-lactaldehyde and glycerone phosphate from L-fucose: step 1/3. Functionally, converts the aldose L-fucose into the corresponding ketose L-fuculose. In Escherichia coli O6:H1 (strain CFT073 / ATCC 700928 / UPEC), this protein is L-fucose isomerase.